A 1031-amino-acid chain; its full sequence is Toll-like receptor 9 (1031 aa).

Positions methionine 1–alanine 25 are cleaved as a signal peptide. Topologically, residues glutamine 26–aspartate 817 are extracellular. Residues cysteine 35 and cysteine 45 are joined by a disulfide bond. Position 47 to 51 (tryptophan 47 to lysine 51) interacts with DNA. LRR repeat units lie at residues arginine 62–glutamine 85, serine 87–cysteine 110, valine 122–serine 147, leucine 150–leucine 166, histidine 167–valine 190, leucine 198–serine 221, glutamate 223–asparagine 242, leucine 243–cysteine 268, leucine 283–glycine 306, glycine 308–glycine 332, leucine 333–leucine 356, leucine 363–proline 386, leucine 390–aspartate 413, phenylalanine 414–glycine 438, cysteine 470–glutamine 494, serine 496–proline 519, leucine 520–glutamate 543, proline 545–asparagine 567, leucine 574–threonine 598, leucine 600–arginine 622, leucine 627–asparagine 650, proline 652–leucine 675, leucine 676–serine 699, threonine 701–leucine 723, alanine 724–phenylalanine 747, and alanine 749–aspartate 772. Residue asparagine 64 is glycosylated (N-linked (GlcNAc...) asparagine). DNA is bound by residues serine 72 to histidine 77 and lysine 95 to proline 109. Cysteine 98 and cysteine 110 are oxidised to a cystine. A glycan (N-linked (GlcNAc...) asparagine) is linked at asparagine 129. DNA is bound by residues tyrosine 132, arginine 152, and tyrosine 179–lysine 181. A disulfide bridge connects residues cysteine 178 and cysteine 184. The N-linked (GlcNAc...) asparagine glycan is linked to asparagine 200. Residue tyrosine 208 participates in DNA binding. Asparagine 210 and asparagine 242 each carry an N-linked (GlcNAc...) asparagine glycan. Intrachain disulfides connect cysteine 255–cysteine 268 and cysteine 258–cysteine 265. Cysteine 258 carries the S-palmitoyl cysteine lipid modification. Arginine 262 provides a ligand contact to DNA. The S-palmitoyl cysteine moiety is linked to residue cysteine 265. N-linked (GlcNAc...) asparagine glycosylation is found at asparagine 309 and asparagine 340. A disulfide bridge connects residues cysteine 470 and cysteine 500. Residues asparagine 472 and asparagine 513 are each glycosylated (N-linked (GlcNAc...) asparagine). The N-linked (GlcNAc...) asparagine glycan is linked to asparagine 567. Asparagine 669 and asparagine 694 each carry an N-linked (GlcNAc...) asparagine glycan. Asparagine 731 carries N-linked (GlcNAc...) asparagine glycosylation. 2 disulfide bridges follow: cysteine 764/cysteine 790 and cysteine 766/cysteine 809. Residues cysteine 818–leucine 838 traverse the membrane as a helical segment. At cysteine 839 to glutamate 1031 the chain is on the cytoplasmic side. The 146-residue stretch at leucine 866 to leucine 1011 folds into the TIR domain.

It belongs to the Toll-like receptor family. In terms of assembly, monomer and homodimer. Exists as a monomer in the absence of unmethylated cytidine-phosphate-guanosine (CpG) ligand. Proteolytic processing of an insertion loop (Z-loop) is required for homodimerization upon binding to the unmethylated CpG ligand leading to its activation. Interacts with MYD88 via their respective TIR domains. Interacts with BTK. Interacts (via transmembrane domain) with UNC93B1. Interacts with CD300LH; the interaction may promote full activation of TLR9-triggered innate responses. Interacts with CNPY3 and HSP90B1; this interaction is required for proper folding in the endoplasmic reticulum. Interacts with SMPDL3B. Interacts with CD82; this interaction is essential for TLR9-dependent myddosome formation in response to CpG stimulation. In terms of processing, activated by proteolytic cleavage of the flexible loop between repeats LRR14 and LRR15 within the ectodomain. Cleavage requires UNC93B1. Proteolytically processed by first removing the majority of the ectodomain by either asparagine endopeptidase (AEP) or a cathepsin followed by a trimming event that is solely cathepsin mediated and required for optimal receptor signaling. Post-translationally, palmitoylated by ZDHHC3 in the Golgi regulates TLR9 trafficking from the Golgi to endosomes. Depalmitoylation by PPT1 controls the release of TLR9 from UNC93B1 in endosomes. Expressed in airway epithelium, vascular endothelium and inflammatory cells in blood vessels of the lungs (at protein level). Highly expressed in pulmonary intravascular macrophages (PIMs) and to a lesser extent in alveolar macrophages, neutrophiles, type-II alveolar epithelial cells and bronchial epithelial cells of the lungs (at protein level). High constitutive intracellular expression in leukocytes including polymorphonuclear leukocytes (PMNs), CD4 and CD8 T cells (at protein level). Expressed throughout the respiratory tract including larynx, upper, middle and lower trachea, and bronchus in isolated equine respiratory epithelial cells (ERECs) and in fully differentiated ERECs cultured at the air-fluid interface (AFI) (at protein level). Constitutively expressed in peripheral blood mononuclear cells (PBMCs), lymph nodes and spleen. The level of expression in PBMCs is about 2- to 3-fold higher than that in lymph nodes and spleen. Very low expression in liver, heart, lung, kidney, small intestine, colon and stomach. Low expression in the airway tissue epithelium of the larynx, upper trachea, middle tranchea, lower trachea, bronchus and spleen, and more abundant expression in mesenteric lymph node. Not expressed in fully differentiated bronchus epithelial cells cultured at the AFI for four weeks. Expressed in gingival tissue.

Its subcellular location is the endoplasmic reticulum membrane. The protein resides in the endosome. It localises to the lysosome. The protein localises to the cytoplasmic vesicle. It is found in the phagosome. Its subcellular location is the cell membrane. The protein resides in the cytoplasm. It localises to the nucleus. Key component of innate and adaptive immunity. TLRs (Toll-like receptors) control host immune response against pathogens through recognition of molecular patterns specific to microorganisms. TLR9 is a nucleotide-sensing TLR which is activated by unmethylated cytidine-phosphate-guanosine (CpG) dinucleotides. Acts via MYD88 and TRAF6, leading to NF-kappa-B activation, cytokine secretion and the inflammatory response. Upon CpG stimulation, induces B-cell proliferation, activation, survival and antibody production. The polypeptide is Toll-like receptor 9 (Equus caballus (Horse)).